The following is a 309-amino-acid chain: NAD kinase (309 aa).

Aspartate 89 functions as the Proton acceptor in the catalytic mechanism. Residues 89 to 90 (DG), 163 to 164 (NE), histidine 174, arginine 191, aspartate 193, and 204 to 209 (TAYSLS) each bind NAD(+).

Belongs to the NAD kinase family. The cofactor is a divalent metal cation.

Its subcellular location is the cytoplasm. The enzyme catalyses NAD(+) + ATP = ADP + NADP(+) + H(+). In terms of biological role, involved in the regulation of the intracellular balance of NAD and NADP, and is a key enzyme in the biosynthesis of NADP. Catalyzes specifically the phosphorylation on 2'-hydroxyl of the adenosine moiety of NAD to yield NADP. The sequence is that of NAD kinase from Shewanella piezotolerans (strain WP3 / JCM 13877).